A 479-amino-acid polypeptide reads, in one-letter code: Ribosomal RNA small subunit methyltransferase F (479 aa).

Residues 125 to 131 (AAAPGSK), E149, D176, and D194 contribute to the S-adenosyl-L-methionine site. The Nucleophile role is filled by C247.

This sequence belongs to the class I-like SAM-binding methyltransferase superfamily. RsmB/NOP family.

The protein resides in the cytoplasm. It catalyses the reaction cytidine(1407) in 16S rRNA + S-adenosyl-L-methionine = 5-methylcytidine(1407) in 16S rRNA + S-adenosyl-L-homocysteine + H(+). Its function is as follows. Specifically methylates the cytosine at position 1407 (m5C1407) of 16S rRNA. The chain is Ribosomal RNA small subunit methyltransferase F from Escherichia coli O157:H7 (strain EC4115 / EHEC).